The following is a 387-amino-acid chain: Probable aminomethyltransferase, mitochondrial (387 aa).

Residues Glu219, Arg248, and Tyr385 each contribute to the substrate site.

Belongs to the GcvT family. The glycine cleavage system is composed of four proteins: P, T, L and H.

Its subcellular location is the mitochondrion. It catalyses the reaction N(6)-[(R)-S(8)-aminomethyldihydrolipoyl]-L-lysyl-[protein] + (6S)-5,6,7,8-tetrahydrofolate = N(6)-[(R)-dihydrolipoyl]-L-lysyl-[protein] + (6R)-5,10-methylene-5,6,7,8-tetrahydrofolate + NH4(+). Functionally, the glycine cleavage system catalyzes the degradation of glycine. This chain is Probable aminomethyltransferase, mitochondrial (gcv1), found in Schizosaccharomyces pombe (strain 972 / ATCC 24843) (Fission yeast).